The sequence spans 104 residues: MSLNEPSIKQRTSSKVEKKEGYPPMYRVVLHNDDYTTMEFVVQILITVFGKSLEKASIIMLNIHKQGKGICGSYTREVAETKVNTVHHLAREQGFPLKSTMEKE.

It belongs to the ClpS family. Binds to the N-terminal domain of the chaperone ClpA.

Its function is as follows. Involved in the modulation of the specificity of the ClpAP-mediated ATP-dependent protein degradation. This is ATP-dependent Clp protease adapter protein ClpS from Desulforapulum autotrophicum (strain ATCC 43914 / DSM 3382 / VKM B-1955 / HRM2) (Desulfobacterium autotrophicum).